The primary structure comprises 156 residues: Protein-export protein SecB (156 aa).

This sequence belongs to the SecB family. In terms of assembly, homotetramer, a dimer of dimers. One homotetramer interacts with 1 SecA dimer.

It localises to the cytoplasm. One of the proteins required for the normal export of preproteins out of the cell cytoplasm. It is a molecular chaperone that binds to a subset of precursor proteins, maintaining them in a translocation-competent state. It also specifically binds to its receptor SecA. The sequence is that of Protein-export protein SecB from Serratia proteamaculans (strain 568).